Consider the following 94-residue polypeptide: Putative septation protein SpoVG (94 aa).

This sequence belongs to the SpoVG family.

Functionally, could be involved in septation. This Acetivibrio thermocellus (strain ATCC 27405 / DSM 1237 / JCM 9322 / NBRC 103400 / NCIMB 10682 / NRRL B-4536 / VPI 7372) (Clostridium thermocellum) protein is Putative septation protein SpoVG.